Consider the following 439-residue polypeptide: FBD-associated F-box protein At5g56380 (439 aa).

An F-box domain is found at 1–61 (MDRISHLADE…LPETWGYQEP (61 aa)). Positions 358–406 (WNQPGSVPRCLSSSLETLEWVEYGGTHEEKELSTYLFKTAVCFKKASFT) constitute an FBD domain.

This chain is FBD-associated F-box protein At5g56380, found in Arabidopsis thaliana (Mouse-ear cress).